Here is a 396-residue protein sequence, read N- to C-terminus: Phosphoglycerate kinase (396 aa).

Residues 21–23 (DFN), Arg36, 59–62 (HLGK), Arg119, and Arg156 contribute to the substrate site. ATP contacts are provided by residues Lys206, Gly294, Glu325, and 352-355 (GGDS).

This sequence belongs to the phosphoglycerate kinase family. Monomer.

Its subcellular location is the cytoplasm. The enzyme catalyses (2R)-3-phosphoglycerate + ATP = (2R)-3-phospho-glyceroyl phosphate + ADP. It participates in carbohydrate degradation; glycolysis; pyruvate from D-glyceraldehyde 3-phosphate: step 2/5. The protein is Phosphoglycerate kinase of Listeria welshimeri serovar 6b (strain ATCC 35897 / DSM 20650 / CCUG 15529 / CIP 8149 / NCTC 11857 / SLCC 5334 / V8).